Consider the following 153-residue polypeptide: MAELPHRIIKETQRLLAEPVPGIKAEPDESNARYFHVVIAGESKDSPFEGGTFKRELLLAEEYPMAAPKVRFMTKIYHPNVDKLERISLDILKDKWSPALQIRTVLLSIQALLNAPNPDDPLANDVVEQWKTNEAQAIETARAWTRLYAMNSI.

The UBC core domain maps to glutamate 3–methionine 150. Lysine 83 is modified (N6-acetyllysine).

This sequence belongs to the ubiquitin-conjugating enzyme family. Expressed in epididymis (at protein level).

This is Putative ubiquitin-conjugating enzyme E2 N-like (UBE2NL) from Homo sapiens (Human).